The sequence spans 1108 residues: Retinal guanylyl cyclase 1 (1108 aa).

Positions 1 to 54 (MSAWLLPAGGLPGAGFCVPARQSPSSFSRVLRWPRPGLPGLLLLLLLPSPSALS) are cleaved as a signal peptide. Topologically, residues 55–465 (AVFKVGVLGP…PDVICNGGVE (411 aa)) are extracellular. A disulfide bridge links Cys-108 with Cys-136. N-linked (GlcNAc...) asparagine glycosylation is present at Asn-300. Residues 466–490 (PGLVFVGFLLVIGMGLTGAFLAHYL) form a helical membrane-spanning segment. A Protein kinase domain is found at 491 to 811 (RHRLLHMQMA…DLTFDLFKSI (321 aa)). At 491 to 1108 (RHRLLHMQMA…KARPGQFTGK (618 aa)) the chain is on the cytoplasmic side. Positions 883–1013 (TLYFSDIVGF…DTVNTASRME (131 aa)) constitute a Guanylate cyclase domain. Residues 1069-1108 (IPKPPDLQPGASNHGISLQEIPPERRKKLEKARPGQFTGK) form a disordered region.

This sequence belongs to the adenylyl cyclase class-4/guanylyl cyclase family. Homodimer; requires homodimerization for guanylyl cyclase activity. Interacts (via C-terminus) with RD3 (via C-terminus); promotes the exit of GUCY2E from the endoplasmic reticulum and its trafficking to the photoreceptor outer segments. Interaction with RD3 negatively regulates GUCY2E guanylate cyclase activity. Post-translationally, there are 9 conserved cysteine residues in sensory guanylate cyclases, 6 in the extracellular domain, which may be involved in intra- or interchain disulfide bonds.

The protein resides in the photoreceptor outer segment membrane. Its subcellular location is the endoplasmic reticulum membrane. It catalyses the reaction GTP = 3',5'-cyclic GMP + diphosphate. With respect to regulation, activated by GUCA1A when free calcium ions concentration is low, and inhibited by GUCA1A when free calcium ions concentration is high. Negatively regulated by RD3; RD3 inhibits the basal and GUCA1A-stimulated guanylate cyclase activity. Catalyzes the synthesis of cyclic GMP (cGMP) in rods and cones of photoreceptors. Plays an essential role in phototransduction, by mediating cGMP replenishment. May also participate in the trafficking of membrane-asociated proteins to the photoreceptor outer segment membrane. This chain is Retinal guanylyl cyclase 1 (Gucy2e), found in Mus musculus (Mouse).